An 82-amino-acid chain; its full sequence is Small ribosomal subunit protein uS17 (82 aa).

The protein belongs to the universal ribosomal protein uS17 family. As to quaternary structure, part of the 30S ribosomal subunit.

In terms of biological role, one of the primary rRNA binding proteins, it binds specifically to the 5'-end of 16S ribosomal RNA. The chain is Small ribosomal subunit protein uS17 from Rickettsia typhi (strain ATCC VR-144 / Wilmington).